We begin with the raw amino-acid sequence, 342 residues long: Succinylglutamate desuccinylase (342 aa).

Residues H63, E66, and H159 each contribute to the Zn(2+) site. The active site involves E222.

Belongs to the AspA/AstE family. Succinylglutamate desuccinylase subfamily. Zn(2+) is required as a cofactor.

It catalyses the reaction N-succinyl-L-glutamate + H2O = L-glutamate + succinate. Its pathway is amino-acid degradation; L-arginine degradation via AST pathway; L-glutamate and succinate from L-arginine: step 5/5. Its function is as follows. Transforms N(2)-succinylglutamate into succinate and glutamate. This chain is Succinylglutamate desuccinylase, found in Paraburkholderia xenovorans (strain LB400).